The primary structure comprises 366 residues: 3-dehydroquinate synthase (366 aa).

NAD(+)-binding positions include 69–74 (DGEAYK), 103–107 (GVIGD), 127–128 (TT), K140, and K149. 3 residues coordinate Zn(2+): E182, H245, and H262.

It belongs to the sugar phosphate cyclases superfamily. Dehydroquinate synthase family. The cofactor is Co(2+). Zn(2+) serves as cofactor. Requires NAD(+) as cofactor.

The protein resides in the cytoplasm. The enzyme catalyses 7-phospho-2-dehydro-3-deoxy-D-arabino-heptonate = 3-dehydroquinate + phosphate. The protein operates within metabolic intermediate biosynthesis; chorismate biosynthesis; chorismate from D-erythrose 4-phosphate and phosphoenolpyruvate: step 2/7. Catalyzes the conversion of 3-deoxy-D-arabino-heptulosonate 7-phosphate (DAHP) to dehydroquinate (DHQ). This chain is 3-dehydroquinate synthase, found in Pseudomonas fluorescens (strain ATCC BAA-477 / NRRL B-23932 / Pf-5).